The primary structure comprises 381 residues: Putative heat shock protein HSP 90-beta 2 (381 aa).

Positions 46, 88, and 107 each coordinate ATP. Residues 145–174 (KEISDGKAEEEKGEKEEENKDDEEKPKIED) show a composition bias toward basic and acidic residues. Residues 145 to 192 (KEISDGKAEEEKGEKEEENKDDEEKPKIEDVGSDEEDDSGKDKKKKTK) are disordered. Serine 177 carries the phosphoserine modification. Positions 315–347 (ELPEDGEEKKRMEERKAKFENLCKFMKETLDKK) form a coiled coil.

Belongs to the heat shock protein 90 family. In terms of assembly, homodimer.

The protein resides in the cytoplasm. Functionally, putative molecular chaperone that may promote the maturation, structural maintenance and proper regulation of specific target proteins. The protein is Putative heat shock protein HSP 90-beta 2 (HSP90AB2P) of Homo sapiens (Human).